Here is a 249-residue protein sequence, read N- to C-terminus: 4-hydroxy-tetrahydrodipicolinate reductase (249 aa).

NAD(+) is bound by residues Asp32, 74–76 (GTT), and 99–102 (SANF). The active-site Proton donor/acceptor is His134. (S)-2,3,4,5-tetrahydrodipicolinate is bound at residue His135. Residue Lys138 is the Proton donor of the active site. Residue 144–145 (GT) coordinates (S)-2,3,4,5-tetrahydrodipicolinate.

This sequence belongs to the DapB family.

The protein localises to the cytoplasm. It carries out the reaction (S)-2,3,4,5-tetrahydrodipicolinate + NAD(+) + H2O = (2S,4S)-4-hydroxy-2,3,4,5-tetrahydrodipicolinate + NADH + H(+). The catalysed reaction is (S)-2,3,4,5-tetrahydrodipicolinate + NADP(+) + H2O = (2S,4S)-4-hydroxy-2,3,4,5-tetrahydrodipicolinate + NADPH + H(+). It functions in the pathway amino-acid biosynthesis; L-lysine biosynthesis via DAP pathway; (S)-tetrahydrodipicolinate from L-aspartate: step 4/4. In terms of biological role, catalyzes the conversion of 4-hydroxy-tetrahydrodipicolinate (HTPA) to tetrahydrodipicolinate. In Chlorobaculum parvum (strain DSM 263 / NCIMB 8327) (Chlorobium vibrioforme subsp. thiosulfatophilum), this protein is 4-hydroxy-tetrahydrodipicolinate reductase.